The sequence spans 739 residues: Poly(A) polymerase gamma (739 aa).

An N6-acetyllysine modification is found at lysine 2. The residue at position 23 (serine 23) is a Phosphoserine. ATP is bound by residues 99 to 101 (FGS), threonine 108, 112 to 114 (DID), aspartate 166, lysine 227, tyrosine 236, and 245 to 246 (GV). Positions 112, 114, and 166 each coordinate Mg(2+). The tract at residues 506-566 (KSLSDVSRSS…PTGEIERSSA (61 aa)) is disordered. Polar residues-rich tracts occupy residues 509-531 (SDVS…TCLD) and 538-556 (SGTP…NPDS). Serine 524 is subject to Phosphoserine. Phosphoserine is present on residues serine 602 and serine 651. At threonine 657 the chain carries Phosphothreonine. Positions 677–688 (SRAAEDRKRKPM) are enriched in basic and acidic residues. A disordered region spans residues 677-725 (SRAAEDRKRKPMDSIGGESMPIPTIDTARKKRLPSKELPDSSSPVPANN). Phosphoserine is present on serine 711.

This sequence belongs to the poly(A) polymerase family. Requires Mg(2+) as cofactor. Mn(2+) serves as cofactor.

Its subcellular location is the nucleus. It carries out the reaction RNA(n) + ATP = RNA(n)-3'-adenine ribonucleotide + diphosphate. Responsible for the post-transcriptional adenylation of the 3'-terminal of mRNA precursors and several small RNAs including signal recognition particle (SRP) RNA, nuclear 7SK RNA, U2 small nuclear RNA, and ribosomal 5S RNA. The chain is Poly(A) polymerase gamma (Papolg) from Mus musculus (Mouse).